We begin with the raw amino-acid sequence, 93 residues long: MEEYYFVKNFESLFEELSQKIAERPEGSGTVEAFDKGIHHLGKKIIEEAGEVWIAAEYQSDEELAEEMSQLLYWLQVMAHKRGLKLEDIYSYL.

It belongs to the PRA-PH family.

It localises to the cytoplasm. The catalysed reaction is 1-(5-phospho-beta-D-ribosyl)-ATP + H2O = 1-(5-phospho-beta-D-ribosyl)-5'-AMP + diphosphate + H(+). It participates in amino-acid biosynthesis; L-histidine biosynthesis; L-histidine from 5-phospho-alpha-D-ribose 1-diphosphate: step 2/9. The protein is Phosphoribosyl-ATP pyrophosphatase of Corynebacterium aurimucosum (strain ATCC 700975 / DSM 44827 / CIP 107346 / CN-1) (Corynebacterium nigricans).